A 783-amino-acid chain; its full sequence is Ubiquitin carboxyl-terminal hydrolase 1 (783 aa).

2 disordered regions span residues 1 to 22 (MPGV…KKNR) and 34 to 55 (KRAL…YKGS). Polar residues predominate over residues 7-16 (SESNGLSRGS). Phosphoserine occurs at positions 16 and 42. Over residues 45–55 (NEEKTSEYKGS) the composition is skewed to basic and acidic residues. A Phosphoserine modification is found at serine 67. In terms of domain architecture, USP spans 81-783 (VGLNNLGNTC…TPYLLFYKKL (703 aa)). Cysteine 90 acts as the Nucleophile in catalysis. The segment at 234 to 311 (EEYQKEEMSD…RKAAGDTLEI (78 aa)) is disordered. 2 stretches are compositionally biased toward basic and acidic residues: residues 250–273 (DNMR…KSDA) and 284–296 (ISKE…ENQR). At serine 473 the chain carries Phosphoserine. The Proton acceptor role is filled by histidine 591. Positions 685–722 (PDKVASTALPENRNSETNNTNGTDESDSNKESSDQTGI) are disordered. Serine 766 carries the phosphoserine modification.

This sequence belongs to the peptidase C19 family. In terms of assembly, interacts with FANCD2 and PCNA. Interacts with WDR48. Interacts with ATAD5; the interaction regulates USP1-mediated PCNA deubiquitination. In terms of processing, autocatalytic cleavage of USP1 following UV irradiation inactivates it, leading to an increase in ubiquitinated PCNA, recruitment of POLH and translesion synthesis. Post-translationally, ubiquitinated by the CRL2(KLHDC2) complex following autocatalytic cleavage, leading to its degradation: the CRL2(KLHDC2) complex recognizes the diglycine (Gly-Gly) at the C-terminus.

It localises to the nucleus. It carries out the reaction Thiol-dependent hydrolysis of ester, thioester, amide, peptide and isopeptide bonds formed by the C-terminal Gly of ubiquitin (a 76-residue protein attached to proteins as an intracellular targeting signal).. Its function is as follows. Negative regulator of DNA damage repair which specifically deubiquitinates monoubiquitinated FANCD2. Also involved in PCNA-mediated translesion synthesis (TLS) by deubiquitinating monoubiquitinated PCNA. Has almost no deubiquitinating activity by itself and requires the interaction with WDR48 to have a high activity. The protein is Ubiquitin carboxyl-terminal hydrolase 1 of Bos taurus (Bovine).